Consider the following 304-residue polypeptide: Non-specific ribonucleoside hydrolase RihC (304 aa).

His-233 is a catalytic residue.

It belongs to the IUNH family. RihC subfamily.

Hydrolyzes both purine and pyrimidine ribonucleosides with a broad-substrate specificity. The chain is Non-specific ribonucleoside hydrolase RihC from Escherichia fergusonii (strain ATCC 35469 / DSM 13698 / CCUG 18766 / IAM 14443 / JCM 21226 / LMG 7866 / NBRC 102419 / NCTC 12128 / CDC 0568-73).